A 120-amino-acid polypeptide reads, in one-letter code: Autophagy-related protein 8C (120 aa).

A disordered region spans residues 1-20; it reads MARSSFKLEHPLERRQAEAN. Residue glycine 117 is the site of Phosphatidylethanolamine amidated glycine attachment. The propeptide at 118-120 is removed in mature form; that stretch reads LFV.

This sequence belongs to the ATG8 family. In terms of assembly, interacts with ATG4. In terms of processing, the C-terminal 3 residues are removed by ATG4 to expose Gly-117 at the C-terminus. The C-terminal Gly is then amidated with phosphatidylethanolamine by an activating system similar to that for ubiquitin.

The protein localises to the cytoplasmic vesicle. It is found in the autophagosome membrane. Its subcellular location is the vacuole membrane. The protein resides in the cytoplasm. It localises to the cytoskeleton. Its function is as follows. Ubiquitin-like modifier involved in autophagosomes formation. May mediate the delivery of the autophagosomes to the vacuole via the microtubule cytoskeleton. The protein is Autophagy-related protein 8C (ATG8C) of Oryza sativa subsp. indica (Rice).